Consider the following 272-residue polypeptide: 3-methyl-2-oxobutanoate hydroxymethyltransferase (272 aa).

Residues aspartate 51 and aspartate 90 each coordinate Mg(2+). 3-methyl-2-oxobutanoate is bound by residues 51 to 52, aspartate 90, and lysine 120; that span reads DS. Mg(2+) is bound at residue glutamate 122. Glutamate 189 (proton acceptor) is an active-site residue.

Belongs to the PanB family. Homodecamer; pentamer of dimers. Mg(2+) is required as a cofactor.

It is found in the cytoplasm. It carries out the reaction 3-methyl-2-oxobutanoate + (6R)-5,10-methylene-5,6,7,8-tetrahydrofolate + H2O = 2-dehydropantoate + (6S)-5,6,7,8-tetrahydrofolate. It functions in the pathway cofactor biosynthesis; (R)-pantothenate biosynthesis; (R)-pantoate from 3-methyl-2-oxobutanoate: step 1/2. Its function is as follows. Catalyzes the reversible reaction in which hydroxymethyl group from 5,10-methylenetetrahydrofolate is transferred onto alpha-ketoisovalerate to form ketopantoate. This chain is 3-methyl-2-oxobutanoate hydroxymethyltransferase, found in Syntrophus aciditrophicus (strain SB).